The sequence spans 420 residues: MGMTMSQKILADRAGLESVRPNDLIMAKLDMVLGNDITTPVAINAFKEAKFQKVFDKDKISLVMDHFAPNKDIKAATQSAQCRCFAKDFDISHYYDVGNMGVEHALLPEQGIVTIGDLIIGADSHTCTYGALGAFSTGVGSTDMAVGMATGQAWFKVPYAIKFNLKGKLRPYVSGKDVILHIIGKIGVDGALYKSMEFGGEGLKNLTIDDRLCIANMAIEAGAKNGIFEVDDITISYAKGRTKRDFRIYKADVDAEYEQVFDIDLDSINHTVAFPHLPENTKEKDDWGEIKIDQVVIGSCTNGRLSDMAVAAEILKDKTIAKNTRCIIIPATQNIYLECINRGYLETFIKAGAVVSTPTCGPCLGGHMGILAANEKCVSTTNRNFVGRMGHITSEVYLSSPEVAAASAVRGILSAPQDIA.

3 residues coordinate [4Fe-4S] cluster: Cys-300, Cys-360, and Cys-363.

The protein belongs to the aconitase/IPM isomerase family. LeuC type 2 subfamily. In terms of assembly, heterodimer of LeuC and LeuD. [4Fe-4S] cluster serves as cofactor.

It carries out the reaction (2R,3S)-3-isopropylmalate = (2S)-2-isopropylmalate. Its pathway is amino-acid biosynthesis; L-leucine biosynthesis; L-leucine from 3-methyl-2-oxobutanoate: step 2/4. Catalyzes the isomerization between 2-isopropylmalate and 3-isopropylmalate, via the formation of 2-isopropylmaleate. In Helicobacter hepaticus (strain ATCC 51449 / 3B1), this protein is 3-isopropylmalate dehydratase large subunit.